A 322-amino-acid chain; its full sequence is MPGNSRRRGAVRKSGTKKGAGVGSGGQRRRGLEGRGPTPPAHLRPHHPAAKRARAQPRRPVKRADETETVLGRNPVLECLRAGVPATALYVALGTEADERLTECVARAADSGIAIVELLRADLDRMTANHLHQGIALQVPPYNYAHPDDLLAAALDQPPALLVALDNLSDPRNLGAIVRSVAAFGGHGVLIPQRRSASVTAVAWRTSAGAAARIPVARATNLTRTLKGWADRGVRVIGLDAGGGTALDDVDGTDSLVVVVGSEGKGLSRLVRQNCDEVVSIPMAAQAESLNASVAAGVVLAAIARQRRRPREPREQTQNRMI.

Basic residues-rich tracts occupy residues 1 to 16 (MPGN…KSGT) and 43 to 61 (LRPH…RRPV). Positions 1–69 (MPGNSRRRGA…PVKRADETET (69 aa)) are disordered. The S-adenosyl-L-methionine site is built by Gly261, Ile281, and Leu290.

It belongs to the class IV-like SAM-binding methyltransferase superfamily. RNA methyltransferase TrmH family.

This is an uncharacterized protein from Mycobacterium bovis (strain BCG / Pasteur 1173P2).